The following is a 1185-amino-acid chain: DNA-directed RNA polymerase subunit beta' (1185 aa).

Zn(2+) contacts are provided by C60, C62, C75, and C78. 3 residues coordinate Mg(2+): D449, D451, and D453. Residues C774, C853, C860, and C863 each coordinate Zn(2+).

It belongs to the RNA polymerase beta' chain family. The RNAP catalytic core consists of 2 alpha, 1 beta, 1 beta' and 1 omega subunit. When a sigma factor is associated with the core the holoenzyme is formed, which can initiate transcription. The cofactor is Mg(2+). Zn(2+) is required as a cofactor.

The catalysed reaction is RNA(n) + a ribonucleoside 5'-triphosphate = RNA(n+1) + diphosphate. In terms of biological role, DNA-dependent RNA polymerase catalyzes the transcription of DNA into RNA using the four ribonucleoside triphosphates as substrates. This is DNA-directed RNA polymerase subunit beta' from Desulforamulus reducens (strain ATCC BAA-1160 / DSM 100696 / MI-1) (Desulfotomaculum reducens).